A 213-amino-acid polypeptide reads, in one-letter code: Protein RCR1 (213 aa).

The Lumenal portion of the chain corresponds to 1 to 39; the sequence is MGLISYENEAINEVKKADNHHVSKFVTSYYGPSSSSWQS. Residues 40–62 form a helical membrane-spanning segment; it reads GIWILFVLFVAAVILIILFTFVA. Over 63–213 the chain is Cytoplasmic; that stretch reads NRRRRRMGRA…PERAKVNARS (151 aa). Positions 104-107 match the PY motif motif; the sequence is VPEY. Residues 190–213 form a disordered region; sequence ERLPGGTTTQEINPPERAKVNARS. A compositionally biased stretch (basic and acidic residues) spans 203-213; that stretch reads PPERAKVNARS.

As to quaternary structure, interacts with PMT4 and WW domain of RSP5.

Its subcellular location is the endoplasmic reticulum membrane. Functionally, regulates chitin deposition in the cell wall. This Saccharomyces cerevisiae (strain ATCC 204508 / S288c) (Baker's yeast) protein is Protein RCR1 (RCR1).